The primary structure comprises 227 residues: 2,3-bisphosphoglycerate-dependent phosphoglycerate mutase (227 aa).

Substrate contacts are provided by residues 7-14, 20-21, arginine 59, 86-89, lysine 97, 113-114, and 182-183; these read RHGLSEWN, TG, ERHY, RR, and GN. Histidine 8 (tele-phosphohistidine intermediate) is an active-site residue. Catalysis depends on glutamate 86, which acts as the Proton donor/acceptor.

This sequence belongs to the phosphoglycerate mutase family. BPG-dependent PGAM subfamily. As to quaternary structure, homodimer.

It carries out the reaction (2R)-2-phosphoglycerate = (2R)-3-phosphoglycerate. It functions in the pathway carbohydrate degradation; glycolysis; pyruvate from D-glyceraldehyde 3-phosphate: step 3/5. Its function is as follows. Catalyzes the interconversion of 2-phosphoglycerate and 3-phosphoglycerate. The sequence is that of 2,3-bisphosphoglycerate-dependent phosphoglycerate mutase from Mannheimia succiniciproducens (strain KCTC 0769BP / MBEL55E).